The following is a 336-amino-acid chain: MSFNLHNRNLLSLIHHNARELRYLLDLARDLKRAKYSGTEQPRLLRKNIALIFEKTSTRTRCAFEVAAYDQGANVTYIDPASSQIGHKESMRDTARVLGRMYDAIEYRGFSQEIVEELAHHAGVPVFNGLTDEYHPTQMLADVMTMREHSDKPLHDIRYAYLGDARNNMGNSLLLIGAKLGMDVRIGAPKSLWPAADFIAQCEAFAAESGARLTLTEDPYEAVKGVDFIHTDVWVSMGEPVEAWDERINALLPYQVNRKLIESTGNPRTRFMHCLPSFHNCETKVGKQIAERYPHLQDGIEVTDEVFESPRCIAFEQAENRMHTIKAVLVSTLGGI.

Residues serine 57–threonine 60, glutamine 84, arginine 108, and histidine 135–glutamine 138 contribute to the carbamoyl phosphate site. L-ornithine is bound by residues asparagine 168, aspartate 232, and serine 236 to methionine 237. Residues cysteine 274–leucine 275 and arginine 321 contribute to the carbamoyl phosphate site.

Belongs to the aspartate/ornithine carbamoyltransferase superfamily. OTCase family.

The protein localises to the cytoplasm. It catalyses the reaction carbamoyl phosphate + L-ornithine = L-citrulline + phosphate + H(+). Its pathway is amino-acid degradation; L-arginine degradation via ADI pathway; carbamoyl phosphate from L-arginine: step 2/2. Reversibly catalyzes the transfer of the carbamoyl group from carbamoyl phosphate (CP) to the N(epsilon) atom of ornithine (ORN) to produce L-citrulline. The sequence is that of Ornithine carbamoyltransferase, catabolic from Burkholderia mallei (strain ATCC 23344).